Reading from the N-terminus, the 203-residue chain is Protein GrpE (203 aa).

The interval 1 to 38 is disordered; that stretch reads MTQDQTAEQMPAAESADQSADQGPAAESAAPPAVDSER.

Belongs to the GrpE family. In terms of assembly, homodimer.

It is found in the cytoplasm. In terms of biological role, participates actively in the response to hyperosmotic and heat shock by preventing the aggregation of stress-denatured proteins, in association with DnaK and GrpE. It is the nucleotide exchange factor for DnaK and may function as a thermosensor. Unfolded proteins bind initially to DnaJ; upon interaction with the DnaJ-bound protein, DnaK hydrolyzes its bound ATP, resulting in the formation of a stable complex. GrpE releases ADP from DnaK; ATP binding to DnaK triggers the release of the substrate protein, thus completing the reaction cycle. Several rounds of ATP-dependent interactions between DnaJ, DnaK and GrpE are required for fully efficient folding. The sequence is that of Protein GrpE from Paramagnetospirillum magneticum (strain ATCC 700264 / AMB-1) (Magnetospirillum magneticum).